Reading from the N-terminus, the 523-residue chain is AarF domain-containing protein kinase 1 (523 aa).

The 337-residue stretch at 148–484 (EFEEKPLGAA…SLWSYIHISL (337 aa)) folds into the Protein kinase domain. ATP contacts are provided by residues 154-162 (LGAASLAQV) and Lys176. The active-site Proton acceptor is Asp308.

It belongs to the protein kinase superfamily. ADCK protein kinase family.

Its subcellular location is the mitochondrion. In terms of biological role, appears to be essential for maintaining mitochondrial cristae formation and mitochondrial function by acting via YME1L1 in a kinase-independent manner to regulate essential mitochondrial structural proteins OPA1 and IMMT. The action of this enzyme is not yet clear. It is not known if it has protein kinase activity and what type of substrate it would phosphorylate (Ser, Thr or Tyr). The sequence is that of AarF domain-containing protein kinase 1 (adck1) from Xenopus tropicalis (Western clawed frog).